A 53-amino-acid polypeptide reads, in one-letter code: ATP synthase protein 8 (53 aa).

The chain crosses the membrane as a helical span at residues 10–30 (IMVFLVSMALLWAIMTMVFFL).

It belongs to the ATPase protein 8 family. As to quaternary structure, F-type ATPases have 2 components, CF(1) - the catalytic core - and CF(0) - the membrane proton channel.

It is found in the mitochondrion membrane. Its function is as follows. Mitochondrial membrane ATP synthase (F(1)F(0) ATP synthase or Complex V) produces ATP from ADP in the presence of a proton gradient across the membrane which is generated by electron transport complexes of the respiratory chain. F-type ATPases consist of two structural domains, F(1) - containing the extramembraneous catalytic core and F(0) - containing the membrane proton channel, linked together by a central stalk and a peripheral stalk. During catalysis, ATP synthesis in the catalytic domain of F(1) is coupled via a rotary mechanism of the central stalk subunits to proton translocation. Part of the complex F(0) domain. Minor subunit located with subunit a in the membrane. The protein is ATP synthase protein 8 (MT-ATP8) of Artemia franciscana (Brine shrimp).